Reading from the N-terminus, the 185-residue chain is Ribosome-recycling factor (185 aa).

This sequence belongs to the RRF family.

The protein resides in the cytoplasm. Functionally, responsible for the release of ribosomes from messenger RNA at the termination of protein biosynthesis. May increase the efficiency of translation by recycling ribosomes from one round of translation to another. This is Ribosome-recycling factor from Streptococcus mutans serotype c (strain ATCC 700610 / UA159).